Consider the following 117-residue polypeptide: Large ribosomal subunit protein eL34 (117 aa).

Ser12 carries the post-translational modification Phosphoserine. Residues Ala16 to Gln28 are compositionally biased toward polar residues. Residues Ala16–His35 are disordered. Lys108 is covalently cross-linked (Glycyl lysine isopeptide (Lys-Gly) (interchain with G-Cter in SUMO2)).

The protein belongs to the eukaryotic ribosomal protein eL34 family. As to quaternary structure, component of the large ribosomal subunit.

Its subcellular location is the cytoplasm. It localises to the cytosol. It is found in the endoplasmic reticulum. In terms of biological role, component of the large ribosomal subunit. The ribosome is a large ribonucleoprotein complex responsible for the synthesis of proteins in the cell. The chain is Large ribosomal subunit protein eL34 (RPL34) from Vicugna pacos (Alpaca).